The sequence spans 177 residues: Cytochrome c-type biogenesis protein CcmE (177 aa).

At 1–7 the chain is on the cytoplasmic side; the sequence is MTRKSRR. Residues 8-28 form a helical; Signal-anchor for type II membrane protein membrane-spanning segment; that stretch reads LILIAACGAVLALALGLILSA. Over 29 to 177 the chain is Periplasmic; that stretch reads MSGSIVFFRS…DATLGQRSER (149 aa). Residues His122 and Tyr126 each contribute to the heme site. Residues 133–177 form a disordered region; the sequence is DALKAQGRWQEGGSKEAPKDASKAAPKDAAKPETADATLGQRSER. Over residues 145–166 the composition is skewed to basic and acidic residues; that stretch reads GSKEAPKDASKAAPKDAAKPET.

This sequence belongs to the CcmE/CycJ family.

The protein resides in the cell inner membrane. Heme chaperone required for the biogenesis of c-type cytochromes. Transiently binds heme delivered by CcmC and transfers the heme to apo-cytochromes in a process facilitated by CcmF and CcmH. The protein is Cytochrome c-type biogenesis protein CcmE of Methylorubrum extorquens (strain PA1) (Methylobacterium extorquens).